Consider the following 324-residue polypeptide: ATP-dependent 6-phosphofructokinase (324 aa).

Gly11 contributes to the ATP binding site. 21–25 (RAVVR) lines the ADP pocket. Residues 72–73 (RE) and 102–105 (GNGS) contribute to the ATP site. Asn103 lines the Mg(2+) pocket. Residue 126–128 (TID) coordinates substrate. Asp128 functions as the Proton acceptor in the catalytic mechanism. Lys155 contacts ADP. Substrate contacts are provided by residues Arg163 and 170–172 (MGR). ADP is bound by residues 186-188 (GAE) and 214-216 (KNF). Substrate-binding positions include Glu223, Arg248, and 254–257 (YIQR).

Belongs to the phosphofructokinase type A (PFKA) family. ATP-dependent PFK group I subfamily. Prokaryotic clade 'B1' sub-subfamily. Homotetramer. It depends on Mg(2+) as a cofactor.

Its subcellular location is the cytoplasm. It catalyses the reaction beta-D-fructose 6-phosphate + ATP = beta-D-fructose 1,6-bisphosphate + ADP + H(+). It participates in carbohydrate degradation; glycolysis; D-glyceraldehyde 3-phosphate and glycerone phosphate from D-glucose: step 3/4. Its activity is regulated as follows. Allosterically activated by ADP and other diphosphonucleosides, and allosterically inhibited by phosphoenolpyruvate. Functionally, catalyzes the phosphorylation of D-fructose 6-phosphate to fructose 1,6-bisphosphate by ATP, the first committing step of glycolysis. In Sulfurihydrogenibium sp. (strain YO3AOP1), this protein is ATP-dependent 6-phosphofructokinase.